The following is a 168-amino-acid chain: 2-C-methyl-D-erythritol 2,4-cyclodiphosphate synthase (168 aa).

Residues D13 and H15 each contribute to the a divalent metal cation site. Residues 13–15 (DVH) and 39–40 (HS) contribute to the 4-CDP-2-C-methyl-D-erythritol 2-phosphate site. H47 contributes to the a divalent metal cation binding site. 4-CDP-2-C-methyl-D-erythritol 2-phosphate is bound by residues 61-63 (DIG), 66-70 (FPDTD), F144, and R147.

Belongs to the IspF family. As to quaternary structure, homotrimer. The cofactor is a divalent metal cation.

The catalysed reaction is 4-CDP-2-C-methyl-D-erythritol 2-phosphate = 2-C-methyl-D-erythritol 2,4-cyclic diphosphate + CMP. The protein operates within isoprenoid biosynthesis; isopentenyl diphosphate biosynthesis via DXP pathway; isopentenyl diphosphate from 1-deoxy-D-xylulose 5-phosphate: step 4/6. Involved in the biosynthesis of isopentenyl diphosphate (IPP) and dimethylallyl diphosphate (DMAPP), two major building blocks of isoprenoid compounds. Catalyzes the conversion of 4-diphosphocytidyl-2-C-methyl-D-erythritol 2-phosphate (CDP-ME2P) to 2-C-methyl-D-erythritol 2,4-cyclodiphosphate (ME-CPP) with a corresponding release of cytidine 5-monophosphate (CMP). In Ralstonia nicotianae (strain ATCC BAA-1114 / GMI1000) (Ralstonia solanacearum), this protein is 2-C-methyl-D-erythritol 2,4-cyclodiphosphate synthase.